The chain runs to 96 residues: Co-chaperonin GroES (96 aa).

This sequence belongs to the GroES chaperonin family. Heptamer of 7 subunits arranged in a ring. Interacts with the chaperonin GroEL.

The protein resides in the cytoplasm. In terms of biological role, together with the chaperonin GroEL, plays an essential role in assisting protein folding. The GroEL-GroES system forms a nano-cage that allows encapsulation of the non-native substrate proteins and provides a physical environment optimized to promote and accelerate protein folding. GroES binds to the apical surface of the GroEL ring, thereby capping the opening of the GroEL channel. This chain is Co-chaperonin GroES, found in Teredinibacter turnerae (strain ATCC 39867 / T7901).